Consider the following 137-residue polypeptide: NADH-quinone oxidoreductase subunit A (137 aa).

The next 3 helical transmembrane spans lie at tryptophan 12–serine 32, phenylalanine 66–tryptophan 86, and tryptophan 95–leucine 115.

Belongs to the complex I subunit 3 family. As to quaternary structure, NDH-1 is composed of 13 different subunits. Subunits NuoA, H, J, K, L, M, N constitute the membrane sector of the complex.

It localises to the cell inner membrane. The catalysed reaction is a quinone + NADH + 5 H(+)(in) = a quinol + NAD(+) + 4 H(+)(out). Its function is as follows. NDH-1 shuttles electrons from NADH, via FMN and iron-sulfur (Fe-S) centers, to quinones in the respiratory chain. The immediate electron acceptor for the enzyme in this species is believed to be ubiquinone. Couples the redox reaction to proton translocation (for every two electrons transferred, four hydrogen ions are translocated across the cytoplasmic membrane), and thus conserves the redox energy in a proton gradient. In Pseudomonas putida (strain ATCC 700007 / DSM 6899 / JCM 31910 / BCRC 17059 / LMG 24140 / F1), this protein is NADH-quinone oxidoreductase subunit A.